Here is a 1465-residue protein sequence, read N- to C-terminus: DNA polymerase III PolC-type (1465 aa).

Residues tyrosine 427–leucine 583 enclose the Exonuclease domain.

The protein belongs to the DNA polymerase type-C family. PolC subfamily.

The protein localises to the cytoplasm. It catalyses the reaction DNA(n) + a 2'-deoxyribonucleoside 5'-triphosphate = DNA(n+1) + diphosphate. In terms of biological role, required for replicative DNA synthesis. This DNA polymerase also exhibits 3' to 5' exonuclease activity. The protein is DNA polymerase III PolC-type of Streptococcus pyogenes serotype M5 (strain Manfredo).